A 320-amino-acid chain; its full sequence is GTP 3',8-cyclase (320 aa).

The Radical SAM core domain occupies 5 to 222 (KLSRPLKVLR…LMKKEFTFYP (218 aa)). R14 provides a ligand contact to GTP. [4Fe-4S] cluster-binding residues include C21, C25, and C28. R65 lines the GTP pocket. G69 serves as a coordination point for S-adenosyl-L-methionine. A GTP-binding site is contributed by T96. S120 contacts S-adenosyl-L-methionine. Residue K157 participates in GTP binding. M191 is an S-adenosyl-L-methionine binding site. The [4Fe-4S] cluster site is built by C253 and C256. A GTP-binding site is contributed by 258–260 (RIR). C270 serves as a coordination point for [4Fe-4S] cluster.

This sequence belongs to the radical SAM superfamily. MoaA family. As to quaternary structure, monomer and homodimer. [4Fe-4S] cluster is required as a cofactor.

The catalysed reaction is GTP + AH2 + S-adenosyl-L-methionine = (8S)-3',8-cyclo-7,8-dihydroguanosine 5'-triphosphate + 5'-deoxyadenosine + L-methionine + A + H(+). It functions in the pathway cofactor biosynthesis; molybdopterin biosynthesis. In terms of biological role, catalyzes the cyclization of GTP to (8S)-3',8-cyclo-7,8-dihydroguanosine 5'-triphosphate. The chain is GTP 3',8-cyclase from Aquifex aeolicus (strain VF5).